A 30-amino-acid polypeptide reads, in one-letter code: Hementerin (30 aa).

Requires Ca(2+) as cofactor.

It is found in the secreted. Its activity is regulated as follows. Fibrino(geno)lytic activity inhibited by EDTA but not by PMSF, E-64, 6-AHA and aprotinin. In terms of biological role, cleaves fibrinogen Aalpha (FGA), gamma (FGG) and Bbeta (FGB) chains. Degrades cross-linked fibrin. Has no amidolytic, plasminogenolytic or caseinolytic activity. Inhibits platelet aggregation induced by collagen (IC(50)=7.5ug/ml) and various other agonists, presumably via activation of a nitridergic pathway. Inhibition is accompanied by reduced ATP release from and surface expression of SELP and CD63 on platelets as well as increased intracellular levels of Ca(2+), cGMP and nitric oxide synthase activity. This chain is Hementerin, found in Haementeria depressa (Leech).